The sequence spans 109 residues: Elongation factor G, chloroplastic (109 aa).

It belongs to the GTP-binding elongation factor family. EF-G/EF-2 subfamily.

Its subcellular location is the plastid. It localises to the chloroplast. It functions in the pathway protein biosynthesis; polypeptide chain elongation. Its function is as follows. Chloroplast-localized elongation factor EF-G involved in protein synthesis in plastids. Catalyzes the GTP-dependent ribosomal translocation step during translation elongation. During this step, the ribosome changes from the pre-translocational (PRE) to the post-translocational (POST) state as the newly formed A-site-bound peptidyl-tRNA and P-site-bound deacylated tRNA move to the P and E sites, respectively. Catalyzes the coordinated movement of the two tRNA molecules, the mRNA and conformational changes in the ribosome. The sequence is that of Elongation factor G, chloroplastic from Arachis hypogaea (Peanut).